A 454-amino-acid chain; its full sequence is UDP-N-acetylmuramate--L-alanine ligase (454 aa).

113-119 (GSHGKTT) provides a ligand contact to ATP.

This sequence belongs to the MurCDEF family.

It is found in the cytoplasm. It carries out the reaction UDP-N-acetyl-alpha-D-muramate + L-alanine + ATP = UDP-N-acetyl-alpha-D-muramoyl-L-alanine + ADP + phosphate + H(+). It functions in the pathway cell wall biogenesis; peptidoglycan biosynthesis. Functionally, cell wall formation. The sequence is that of UDP-N-acetylmuramate--L-alanine ligase from Sulfurihydrogenibium sp. (strain YO3AOP1).